A 512-amino-acid chain; its full sequence is Glutathione-binding protein GsiB (512 aa).

Positions Met-1 to Ala-26 are cleaved as a signal peptide.

It belongs to the bacterial solute-binding protein 5 family. As to quaternary structure, the complex is composed of two ATP-binding proteins (GsiA), two transmembrane proteins (GsiC and GsiD) and a solute-binding protein (GsiB). In the presence of glutathione, interacts with the transmembrane proteins GsiC and GsiD.

The protein resides in the periplasm. Part of the ABC transporter complex GsiABCD involved in glutathione import. Binds glutathione. In Escherichia coli (strain K12), this protein is Glutathione-binding protein GsiB.